Consider the following 378-residue polypeptide: Ubiquitin-conjugating enzyme E2 Q2 (378 aa).

The interval 126–152 is disordered; sequence DQPLPTGQNGTTEEVTSEEEEEEEMAE. Over residues 140–152 the composition is skewed to acidic residues; it reads VTSEEEEEEEMAE. The 165-residue stretch at 207–371 folds into the UBC core domain; the sequence is QASDRLMKEL…VQIHEKNGWY (165 aa). Cys307 serves as the catalytic Glycyl thioester intermediate.

It belongs to the ubiquitin-conjugating enzyme family. Auto-ubiquitinated in vitro.

It localises to the cytoplasm. It carries out the reaction S-ubiquitinyl-[E1 ubiquitin-activating enzyme]-L-cysteine + [E2 ubiquitin-conjugating enzyme]-L-cysteine = [E1 ubiquitin-activating enzyme]-L-cysteine + S-ubiquitinyl-[E2 ubiquitin-conjugating enzyme]-L-cysteine.. It functions in the pathway protein modification; protein ubiquitination. Accepts ubiquitin from the E1 complex and catalyzes its covalent attachment to other proteins. In vitro catalyzes 'Lys-48'-linked polyubiquitination. This Mus musculus (Mouse) protein is Ubiquitin-conjugating enzyme E2 Q2 (Ube2q2).